We begin with the raw amino-acid sequence, 384 residues long: Xylose repressor (384 aa).

The H-T-H motif DNA-binding region spans 29–48 (RAKLSEMTGLNKSTVSSQVN).

This sequence belongs to the ROK (NagC/XylR) family.

Functionally, transcriptional repressor of xylose-utilizing enzymes. The chain is Xylose repressor (xylR) from Bacillus spizizenii (strain ATCC 23059 / NRRL B-14472 / W23) (Bacillus subtilis subsp. spizizenii).